Here is a 466-residue protein sequence, read N- to C-terminus: Trigger factor (466 aa).

The PPIase FKBP-type domain maps to Gly-162–Pro-243. Residues Gly-428–Thr-466 form a disordered region. The segment covering Ala-457–Thr-466 has biased composition (low complexity).

This sequence belongs to the FKBP-type PPIase family. Tig subfamily.

The protein localises to the cytoplasm. It catalyses the reaction [protein]-peptidylproline (omega=180) = [protein]-peptidylproline (omega=0). In terms of biological role, involved in protein export. Acts as a chaperone by maintaining the newly synthesized protein in an open conformation. Functions as a peptidyl-prolyl cis-trans isomerase. The sequence is that of Trigger factor from Mycobacterium tuberculosis (strain ATCC 25177 / H37Ra).